Here is a 475-residue protein sequence, read N- to C-terminus: Ribulose bisphosphate carboxylase large chain (475 aa).

Residues 1 to 2 (MS) constitute a propeptide that is removed on maturation. N-acetylproline is present on proline 3. Lysine 14 carries the N6,N6,N6-trimethyllysine modification. Residues asparagine 123 and threonine 173 each contribute to the substrate site. Lysine 175 (proton acceptor) is an active-site residue. Lysine 177 provides a ligand contact to substrate. Mg(2+) is bound by residues lysine 201, aspartate 203, and glutamate 204. N6-carboxylysine is present on lysine 201. Residue histidine 294 is the Proton acceptor of the active site. Positions 295, 327, and 379 each coordinate substrate.

Belongs to the RuBisCO large chain family. Type I subfamily. Heterohexadecamer of 8 large chains and 8 small chains; disulfide-linked. The disulfide link is formed within the large subunit homodimers. Mg(2+) is required as a cofactor. The disulfide bond which can form in the large chain dimeric partners within the hexadecamer appears to be associated with oxidative stress and protein turnover.

The protein localises to the plastid. It localises to the chloroplast. It catalyses the reaction 2 (2R)-3-phosphoglycerate + 2 H(+) = D-ribulose 1,5-bisphosphate + CO2 + H2O. The enzyme catalyses D-ribulose 1,5-bisphosphate + O2 = 2-phosphoglycolate + (2R)-3-phosphoglycerate + 2 H(+). RuBisCO catalyzes two reactions: the carboxylation of D-ribulose 1,5-bisphosphate, the primary event in carbon dioxide fixation, as well as the oxidative fragmentation of the pentose substrate in the photorespiration process. Both reactions occur simultaneously and in competition at the same active site. The protein is Ribulose bisphosphate carboxylase large chain of Populus tremuloides (Quaking aspen).